Reading from the N-terminus, the 259-residue chain is Protein-L-isoaspartate O-methyltransferase (259 aa).

Residues 1–25 (MRKRVDPPAGGRLAPGITPANSNTR) form a disordered region. Residue Ser107 is part of the active site.

The protein belongs to the methyltransferase superfamily. L-isoaspartyl/D-aspartyl protein methyltransferase family.

It localises to the cytoplasm. The enzyme catalyses [protein]-L-isoaspartate + S-adenosyl-L-methionine = [protein]-L-isoaspartate alpha-methyl ester + S-adenosyl-L-homocysteine. Functionally, catalyzes the methyl esterification of L-isoaspartyl residues in peptides and proteins that result from spontaneous decomposition of normal L-aspartyl and L-asparaginyl residues. It plays a role in the repair and/or degradation of damaged proteins. This is Protein-L-isoaspartate O-methyltransferase from Bordetella bronchiseptica (strain ATCC BAA-588 / NCTC 13252 / RB50) (Alcaligenes bronchisepticus).